Reading from the N-terminus, the 338-residue chain is Lipoate-protein ligase A (338 aa).

Residues 29 to 216 (PATQRVLFLW…AFFEHYSERV (188 aa)) form the BPL/LPL catalytic domain. ATP is bound by residues Arg-71, 76–79 (GAVF), and Lys-134. A (R)-lipoate-binding site is contributed by Lys-134.

It belongs to the LplA family. Monomer.

The protein resides in the cytoplasm. It catalyses the reaction L-lysyl-[lipoyl-carrier protein] + (R)-lipoate + ATP = N(6)-[(R)-lipoyl]-L-lysyl-[lipoyl-carrier protein] + AMP + diphosphate + H(+). It participates in protein modification; protein lipoylation via exogenous pathway; protein N(6)-(lipoyl)lysine from lipoate: step 1/2. It functions in the pathway protein modification; protein lipoylation via exogenous pathway; protein N(6)-(lipoyl)lysine from lipoate: step 2/2. In terms of biological role, catalyzes both the ATP-dependent activation of exogenously supplied lipoate to lipoyl-AMP and the transfer of the activated lipoyl onto the lipoyl domains of lipoate-dependent enzymes. This chain is Lipoate-protein ligase A, found in Enterobacter sp. (strain 638).